Consider the following 399-residue polypeptide: Transcription termination factor 1, mitochondrial (399 aa).

Residues 1–57 (MQSLSLGQTSISKGLNYLTIMAPGNLWHMRNNFLFGSRCWMTRFSAENIFKSVSFRL) constitute a mitochondrion transit peptide. 5 interaction with DNA regions span residues 169–170 (RS), 247–251 (QSTKR), 324–331 (AEKKFNDK), 355–358 (SIST), and 384–391 (SKKRYEAK).

It belongs to the mTERF family. As to quaternary structure, monomer. In terms of processing, phosphoprotein with mostly four phosphate groups. While the DNA-binding activity is unaffected by the phosphorylation state, only the phosphorylated form of the protein is active for termination activity. Functioning seems to be regulated by phosphorylation.

It is found in the mitochondrion. Functionally, transcription termination factor. Binds to a 28 bp region within the tRNA(Leu(uur)) gene at a position immediately adjacent to and downstream of the 16S rRNA gene; this region comprises a tridecamer sequence critical for directing accurate termination. Binds DNA along the major grove and promotes DNA bending and partial unwinding. Promotes base flipping. Transcription termination activity appears to be polarized with highest specificity for transcripts initiated on the light strand. The polypeptide is Transcription termination factor 1, mitochondrial (MTERF1) (Homo sapiens (Human)).